Reading from the N-terminus, the 381-residue chain is Probable tRNA sulfurtransferase (381 aa).

Residues 60-168 enclose the THUMP domain; the sequence is REATEVLTRV…EGKAYIFVDK (109 aa). ATP-binding positions include 186 to 187, K269, G291, and Q300; that span reads LL.

This sequence belongs to the ThiI family.

The protein resides in the cytoplasm. It carries out the reaction [ThiI sulfur-carrier protein]-S-sulfanyl-L-cysteine + a uridine in tRNA + 2 reduced [2Fe-2S]-[ferredoxin] + ATP + H(+) = [ThiI sulfur-carrier protein]-L-cysteine + a 4-thiouridine in tRNA + 2 oxidized [2Fe-2S]-[ferredoxin] + AMP + diphosphate. The catalysed reaction is [ThiS sulfur-carrier protein]-C-terminal Gly-Gly-AMP + S-sulfanyl-L-cysteinyl-[cysteine desulfurase] + AH2 = [ThiS sulfur-carrier protein]-C-terminal-Gly-aminoethanethioate + L-cysteinyl-[cysteine desulfurase] + A + AMP + 2 H(+). It functions in the pathway cofactor biosynthesis; thiamine diphosphate biosynthesis. Catalyzes the ATP-dependent transfer of a sulfur to tRNA to produce 4-thiouridine in position 8 of tRNAs, which functions as a near-UV photosensor. Also catalyzes the transfer of sulfur to the sulfur carrier protein ThiS, forming ThiS-thiocarboxylate. This is a step in the synthesis of thiazole, in the thiamine biosynthesis pathway. The sulfur is donated as persulfide by IscS. The polypeptide is Probable tRNA sulfurtransferase (Thermococcus kodakarensis (strain ATCC BAA-918 / JCM 12380 / KOD1) (Pyrococcus kodakaraensis (strain KOD1))).